A 248-amino-acid chain; its full sequence is UPF0524 protein C3orf70 homolog (248 aa).

Positions 169 to 248 (KESDTPKLGH…EVIETMETTV (80 aa)) are disordered. Residues 200–227 (SCDEDTEEGAELSSEEDYSPESSWEPDE) are compositionally biased toward acidic residues.

The protein belongs to the UPF0524 family.

May play a role in neuronal and neurobehavioral development. The protein is UPF0524 protein C3orf70 homolog of Mus musculus (Mouse).